The primary structure comprises 932 residues: Isoleucine--tRNA ligase (932 aa).

Positions 59–69 match the 'HIGH' region motif; it reads PYANGTIHIGH. Glu-562 lines the L-isoleucyl-5'-AMP pocket. The 'KMSKS' region signature appears at 603-607; the sequence is KMSKS. Lys-606 serves as a coordination point for ATP. Cys-899, Cys-902, Cys-915, and Cys-918 together coordinate Zn(2+).

This sequence belongs to the class-I aminoacyl-tRNA synthetase family. IleS type 1 subfamily. In terms of assembly, monomer. Zn(2+) serves as cofactor.

It is found in the cytoplasm. The catalysed reaction is tRNA(Ile) + L-isoleucine + ATP = L-isoleucyl-tRNA(Ile) + AMP + diphosphate. Its function is as follows. Catalyzes the attachment of isoleucine to tRNA(Ile). As IleRS can inadvertently accommodate and process structurally similar amino acids such as valine, to avoid such errors it has two additional distinct tRNA(Ile)-dependent editing activities. One activity is designated as 'pretransfer' editing and involves the hydrolysis of activated Val-AMP. The other activity is designated 'posttransfer' editing and involves deacylation of mischarged Val-tRNA(Ile). This chain is Isoleucine--tRNA ligase, found in Pasteurella multocida (strain Pm70).